Reading from the N-terminus, the 1829-residue chain is Iron-regulated protein FrpC (1829 aa).

Hemolysin-type calcium-binding repeat units follow at residues 869–886 (FGHN…NDTL), 887–904 (IGGA…SDTY), 1015–1032 (NGGL…DDLL), 1033–1050 (NGDA…NDTL), 1051–1068 (NGGE…NDAL), 1069–1086 (NGGE…NDTL), 1087–1104 (IGGA…SDTY), 1215–1232 (NGGL…DDLL), 1233–1250 (NGDA…NDTL), 1251–1268 (DGGE…NDAL), 1269–1286 (NGGE…NDTL), 1287–1304 (IGGA…SDTY), 1415–1432 (NGGL…DDLL), 1433–1450 (NGDA…NDTL), 1451–1468 (DGGE…NDAL), 1469–1486 (NGGE…NDTL), 1487–1504 (IGGA…SDTY), 1615–1632 (NGGL…DDLL), 1633–1650 (NGDA…NDTL), 1651–1668 (NGGE…NDVL), 1669–1686 (NGGE…NDTL), and 1687–1704 (IGGA…SDTY).

It belongs to the RTX prokaryotic toxin (TC 1.C.11) family.

Its subcellular location is the cell outer membrane. It is found in the secreted. Its function is as follows. May participate in the pathogenesis of meningococcal disease. The polypeptide is Iron-regulated protein FrpC (frpC) (Neisseria meningitidis serogroup C).